Here is a 372-residue protein sequence, read N- to C-terminus: N-acetylneuraminate-9-phosphate synthase (372 aa).

The region spanning 314 to 372 is the AFP-like domain; the sequence is SIVAARNLNKGYRLQLADMAIKVSEPSGLTAEDFLDLVGKELADNIGEDEPILGNSIIN.

It carries out the reaction aldehydo-N-acetyl-D-mannosamine 6-phosphate + phosphoenolpyruvate + H2O = N-acetylneuraminate 9-phosphate + phosphate. It catalyses the reaction aldehydo-D-mannose 6-phosphate + phosphoenolpyruvate + H2O = 3-deoxy-D-glycero-beta-D-galacto-non-2-ulopyranosonate 9-phosphate + phosphate. Catalyzes the condensation of phosphoenolpyruvate (PEP) and N-acetylmannosamine 6-phosphate (ManNAc-6-P) or D-mannose 6-phosphate (Man-6-P) to generate the phosphorylated forms of both the sialic acids N-acetylneuraminic acid (Neu5Ac) and deaminoneuraminic acid (KDN), respectively. Essential for biosynthesis of sialic acids in neurons of the central nervous system. The sequence is that of N-acetylneuraminate-9-phosphate synthase from Drosophila melanogaster (Fruit fly).